The primary structure comprises 112 residues: Probable fatty acid-binding protein (112 aa).

Belongs to the calycin superfamily. Fatty-acid binding protein (FABP) family.

The chain is Probable fatty acid-binding protein from Anopheles gambiae (African malaria mosquito).